We begin with the raw amino-acid sequence, 156 residues long: MPRRRVVGQRKILPDPKFGSELLAKFVNVVMVDGKKSVSEAIVYGALDIIATKTGKEHLAVFEEALDNIRPAVEVKSRRVGGATYQVPVEVRPVRRNALAMRWLVDAARKRGEKSMAQRLAGELLDAADNKGSSVKKREDVHRMAEANKAFAHFRW.

The protein belongs to the universal ribosomal protein uS7 family. As to quaternary structure, part of the 30S ribosomal subunit. Contacts proteins S9 and S11.

One of the primary rRNA binding proteins, it binds directly to 16S rRNA where it nucleates assembly of the head domain of the 30S subunit. Is located at the subunit interface close to the decoding center, probably blocks exit of the E-site tRNA. The sequence is that of Small ribosomal subunit protein uS7 from Aeromonas hydrophila subsp. hydrophila (strain ATCC 7966 / DSM 30187 / BCRC 13018 / CCUG 14551 / JCM 1027 / KCTC 2358 / NCIMB 9240 / NCTC 8049).